A 264-amino-acid polypeptide reads, in one-letter code: ELL-associated factor 2 (264 aa).

Disordered regions lie at residues 114–154 (EGSS…PSSP) and 169–264 (MDQL…DSDD). The segment covering 117 to 142 (SKVQSRIEQQQQQIRNSSKTPNNIKN) has biased composition (polar residues). Residues 173–196 (SSSDSSSDSKSSSSSSSSSENSSS) show a composition bias toward low complexity. Over residues 228-238 (VPDKDASHNRS) the composition is skewed to basic and acidic residues. The span at 239–264 (QENSGHMMNTLRSDLQLSESGSDSDD) shows a compositional bias: polar residues.

The protein belongs to the EAF family.

The protein localises to the nucleus speckle. In terms of biological role, may act as a transcriptional transactivator. The sequence is that of ELL-associated factor 2 (EAF2) from Gallus gallus (Chicken).